The primary structure comprises 113 residues: Probable 4-amino-4-deoxy-L-arabinose-phosphoundecaprenol flippase subunit ArnE (113 aa).

3 helical membrane-spanning segments follow: residues 37–57 (SALKWLIGAVILLAVGMLFWL), 62–82 (ILPLGIAYPMLSINFIMVTLA), and 91–111 (AGIKHWSGVVFIMLGILLMSL). The EamA domain occupies 45–111 (AVILLAVGML…IMLGILLMSL (67 aa)).

This sequence belongs to the ArnE family. In terms of assembly, heterodimer of ArnE and ArnF.

It is found in the cell inner membrane. It functions in the pathway bacterial outer membrane biogenesis; lipopolysaccharide biosynthesis. In terms of biological role, translocates 4-amino-4-deoxy-L-arabinose-phosphoundecaprenol (alpha-L-Ara4N-phosphoundecaprenol) from the cytoplasmic to the periplasmic side of the inner membrane. This Photorhabdus laumondii subsp. laumondii (strain DSM 15139 / CIP 105565 / TT01) (Photorhabdus luminescens subsp. laumondii) protein is Probable 4-amino-4-deoxy-L-arabinose-phosphoundecaprenol flippase subunit ArnE.